Here is a 175-residue protein sequence, read N- to C-terminus: Transcription factor E (175 aa).

The 86-residue stretch at 3–88 (ENPLIQQVLF…TWKPSLEKVP (86 aa)) folds into the HTH TFE/IIEalpha-type domain.

Belongs to the TFE family. As to quaternary structure, monomer. Interaction with RNA polymerase subunits RpoF and RpoE is necessary for Tfe stimulatory transcription activity. Able to interact with Tbp and RNA polymerase in the absence of DNA promoter. Interacts both with the preinitiation and elongation complexes.

Its function is as follows. Transcription factor that plays a role in the activation of archaeal genes transcribed by RNA polymerase. Facilitates transcription initiation by enhancing TATA-box recognition by TATA-box-binding protein (Tbp), and transcription factor B (Tfb) and RNA polymerase recruitment. Not absolutely required for transcription in vitro, but particularly important in cases where Tbp or Tfb function is not optimal. It dynamically alters the nucleic acid-binding properties of RNA polymerases by stabilizing the initiation complex and destabilizing elongation complexes. Seems to translocate with the RNA polymerase following initiation and acts by binding to the non template strand of the transcription bubble in elongation complexes. The protein is Transcription factor E of Methanococcus maripaludis (strain DSM 14266 / JCM 13030 / NBRC 101832 / S2 / LL).